The following is a 312-amino-acid chain: MALRPEDPSSGFRHGNVVAFIIEKMARHTKGPEFYFENISLSWEEVEDKLRAILEDSEVPSEVKEACTWGSLALGVRFAHRQGQLQNRRVQWLQGFAKLHRSAALVLASNLTELKEQQEMECNEATFQLQLTETSLAEVQRERDMLRWKLFHAELAPPQGQGQATVFPGLATAGGDWTEGAGEQEKEAVAAAGAAGGKGEERYAEAGPAPAEVLQGLGGGFRQPLGAIVAGKLHLCGAEGERSQVSTNSHVCLLWAWVHSLTGASSCPAPYLIHILIPMPFVRLLSHTQYTPFTSKGHRTGSNSDAFQLGGL.

This sequence belongs to the TEX13 family. As to expression, testis specific.

The chain is Testis-expressed protein 13B (TEX13B) from Homo sapiens (Human).